The following is a 427-amino-acid chain: U1 small nuclear ribonucleoprotein 70 kDa (427 aa).

Disordered regions lie at residues 82–102 (EPGD…SQKR) and 215–427 (RGRT…EYVR). Positions 93–102 (PEVELPSQKR) are enriched in basic and acidic residues. In terms of domain architecture, RRM spans 138–216 (KTLFVSRLNY…RRVLVDVERG (79 aa)). Gly residues predominate over residues 227-241 (LGGGLGTSRVGGGEE). 2 stretches are compositionally biased toward basic and acidic residues: residues 257 to 402 (EPSR…RYDK) and 409 to 427 (RYER…EYVR). The residue at position 282 (serine 282) is a Phosphoserine.

In terms of assembly, component of the spliceosome. Interacts with CYP63, U2AF35A, U2AF35B, SRZ21, RSZ22, SR34, SR45, SR45A and SCL33. In terms of processing, phosphorylated. The association and dissociation with SR45 is not affected by the phosphorylation status. In terms of tissue distribution, ubiquitous.

The protein resides in the nucleus speckle. It is found in the nucleus. It localises to the nucleoplasm. In terms of biological role, mediates the splicing of pre-mRNA by binding to the loop I region of U1-snRNA. This Arabidopsis thaliana (Mouse-ear cress) protein is U1 small nuclear ribonucleoprotein 70 kDa (RNU1).